A 638-amino-acid polypeptide reads, in one-letter code: tRNA uridine 5-carboxymethylaminomethyl modification enzyme MnmG (638 aa).

Residues 13–18 (GGGHAG), Val-125, and Ser-180 each bind FAD. 273 to 287 (GPRYCPSIEDKIHRF) lines the NAD(+) pocket. Gln-370 contributes to the FAD binding site.

It belongs to the MnmG family. In terms of assembly, homodimer. Heterotetramer of two MnmE and two MnmG subunits. FAD is required as a cofactor.

It localises to the cytoplasm. In terms of biological role, NAD-binding protein involved in the addition of a carboxymethylaminomethyl (cmnm) group at the wobble position (U34) of certain tRNAs, forming tRNA-cmnm(5)s(2)U34. The protein is tRNA uridine 5-carboxymethylaminomethyl modification enzyme MnmG of Cellvibrio japonicus (strain Ueda107) (Pseudomonas fluorescens subsp. cellulosa).